Reading from the N-terminus, the 98-residue chain is NADH-ubiquinone oxidoreductase chain 4L (98 aa).

3 helical membrane passes run 1-21, 29-49, and 59-79; these read MTPV…GLAF, ALLC…LWAL, and APML…ALLV.

The protein belongs to the complex I subunit 4L family.

It is found in the mitochondrion membrane. It catalyses the reaction a ubiquinone + NADH + 5 H(+)(in) = a ubiquinol + NAD(+) + 4 H(+)(out). Its function is as follows. Core subunit of the mitochondrial membrane respiratory chain NADH dehydrogenase (Complex I) which catalyzes electron transfer from NADH through the respiratory chain, using ubiquinone as an electron acceptor. Part of the enzyme membrane arm which is embedded in the lipid bilayer and involved in proton translocation. The polypeptide is NADH-ubiquinone oxidoreductase chain 4L (MT-ND4L) (Carassius auratus (Goldfish)).